We begin with the raw amino-acid sequence, 340 residues long: Uroporphyrinogen decarboxylase (340 aa).

Substrate contacts are provided by residues 21–25 (RQAGR), D71, Y148, S203, and H316.

The protein belongs to the uroporphyrinogen decarboxylase family. As to quaternary structure, homodimer.

It is found in the cytoplasm. The catalysed reaction is uroporphyrinogen III + 4 H(+) = coproporphyrinogen III + 4 CO2. It functions in the pathway porphyrin-containing compound metabolism; protoporphyrin-IX biosynthesis; coproporphyrinogen-III from 5-aminolevulinate: step 4/4. Functionally, catalyzes the decarboxylation of four acetate groups of uroporphyrinogen-III to yield coproporphyrinogen-III. In Campylobacter lari (strain RM2100 / D67 / ATCC BAA-1060), this protein is Uroporphyrinogen decarboxylase.